The following is a 424-amino-acid chain: Pachytene checkpoint protein 2 homolog (424 aa).

171–178 provides a ligand contact to ATP; it reads GPPGTGKT.

This sequence belongs to the AAA ATPase family. PCH2 subfamily.

Plays a key role in chromosome recombination and chromosome structure development during meiosis. Required at early steps in meiotic recombination that leads to non-crossovers pathways. Also needed for efficient completion of homologous synapsis by influencing crossover distribution along the chromosomes affecting both crossovers and non-crossovers pathways. The protein is Pachytene checkpoint protein 2 homolog (trip13) of Danio rerio (Zebrafish).